The sequence spans 92 residues: Small ribosomal subunit protein bS6 (92 aa).

It belongs to the bacterial ribosomal protein bS6 family.

Its function is as follows. Binds together with bS18 to 16S ribosomal RNA. This chain is Small ribosomal subunit protein bS6, found in Clostridioides difficile (strain 630) (Peptoclostridium difficile).